We begin with the raw amino-acid sequence, 101 residues long: uncharacterized protein (101 aa).

Its subcellular location is the cytoplasm. This is an uncharacterized protein from Saccharomyces cerevisiae (strain ATCC 204508 / S288c) (Baker's yeast).